The chain runs to 901 residues: Alanine--tRNA ligase (901 aa).

Zn(2+)-binding residues include H600, H604, C704, and H708.

This sequence belongs to the class-II aminoacyl-tRNA synthetase family. The cofactor is Zn(2+).

It localises to the cytoplasm. The enzyme catalyses tRNA(Ala) + L-alanine + ATP = L-alanyl-tRNA(Ala) + AMP + diphosphate. In terms of biological role, catalyzes the attachment of alanine to tRNA(Ala) in a two-step reaction: alanine is first activated by ATP to form Ala-AMP and then transferred to the acceptor end of tRNA(Ala). Also edits incorrectly charged Ser-tRNA(Ala) and Gly-tRNA(Ala) via its editing domain. The polypeptide is Alanine--tRNA ligase (Ignicoccus hospitalis (strain KIN4/I / DSM 18386 / JCM 14125)).